Reading from the N-terminus, the 404-residue chain is MEAGEEPLLLAELKPGRPHQFDWKSSCETWSVAFSPDGSWFAWSQGHCIVKLIPWPLEEQFIPKGFEAKSRSSKNETKGRGSPKEKTLDCGQIVWGLAFSPWPSPPSRKLWARHHPQVPDVSCLVLATGLNDGQIKIWEVQTGLLLLNLSGHQDVVRDLSFTPSGSLILVSASRDKTLRIWDLNKHGKQIQVLSGHLQWVYCCSISPDCSMLCSAAGEKSVFLWSMRSYTLIRKLEGHQSSVVSCDFSPDSALLVTASYDTNVIMWDPYTGERLRSLHHTQVDPAMDDSDVHISSLRSVCFSPEGLYLATVADDRLLRIWALELKTPIAFAPMTNGLCCTFFPHGGVIATGTRDGHVQFWTAPRVLSSLKHLCRKALRSFLTTYQVLALPIPKKMKEFLTYRTF.

WD repeat units follow at residues Gly16–Trp55, Gly81–Val140, Leu144–Leu183, Lys188–Met226, Thr230–Pro268, Asp283–Leu322, and Lys325–Ala362. Residues Ala68–Thr87 form a disordered region. In terms of domain architecture, SOCS box spans His356–Phe404.

It participates in protein modification; protein ubiquitination. In terms of biological role, may be a substrate-recognition component of a SCF-like ECS (Elongin-Cullin-SOCS-box protein) E3 ubiquitin ligase complex which mediates the ubiquitination and subsequent proteasomal degradation of target proteins. The chain is WD repeat and SOCS box-containing protein 2 (WSB2) from Homo sapiens (Human).